Consider the following 34-residue polypeptide: Trypsin inhibitor 2 (34 aa).

A cross-link (cyclopeptide (Ser-Gly)) is located at residues 1 to 34; the sequence is SGSDGGVCPKILKKCRRDSDCPGACICRGNGYCG. The segment at residues 4 to 5 is a cross-link ((2-aminosuccinimidyl)acetic acid (Asp-Gly); alternate); the sequence is DG. The segment at residues 4–5 is a cross-link (isoaspartyl glycine isopeptide (Asp-Gly); alternate); the sequence is DG. 3 cysteine pairs are disulfide-bonded: Cys-8–Cys-25, Cys-15–Cys-27, and Cys-21–Cys-33.

In terms of processing, a cyclic succinimide probably forms by loss of water between Asp-4 and Gly-5, that can then rehydrate to either the original peptide bond or to a beta-aspartyl isopeptide bond. Three isoforms of MCoTI-II are detected, two with the parent molecular weight, corresponding to the unmodified and proposed isopeptide forms, and one with a molecular weight 18 Da lower, corresponding to a succinimide cross-linked form. This is a cyclic peptide.

It localises to the secreted. Functionally, inhibits trypsin; probably participates in a plant defense mechanism. This Momordica cochinchinensis (Spiny bitter cucumber) protein is Trypsin inhibitor 2.